Here is a 436-residue protein sequence, read N- to C-terminus: UPF0597 protein YhaM (436 aa).

It belongs to the UPF0597 family.

This is UPF0597 protein YhaM from Shigella dysenteriae serotype 1 (strain Sd197).